Here is a 501-residue protein sequence, read N- to C-terminus: Archaemetzincin-1 (501 aa).

Position 261 (His261) interacts with Zn(2+). The active-site Proton acceptor is the Glu262. Zn(2+)-binding residues include His265, Cys272, Cys277, Cys296, and Cys299. The segment at 349–370 is disordered; that stretch reads DSGMGCESDTEPVTSPSEPVTP.

This sequence belongs to the peptidase M54 family. Zn(2+) is required as a cofactor.

In terms of biological role, probable zinc metalloprotease. This is Archaemetzincin-1 (Amz1) from Rattus norvegicus (Rat).